Here is a 417-residue protein sequence, read N- to C-terminus: Snake venom metalloproteinase aculysin-1 (417 aa).

A signal peptide spans 1–20 (MIQVLLVTICLAAFPYQGSS). Positions 21 to 189 (IMLESGKVND…KKPSWLNLTP (169 aa)) are excised as a propeptide. The Peptidase M12B domain occupies 197-392 (TSVNLQLIVD…KKPKCIHKKS (196 aa)). 3 disulfide bridges follow: cysteine 308-cysteine 387, cysteine 349-cysteine 371, and cysteine 351-cysteine 354. Position 333 (histidine 333) interacts with Zn(2+). Glutamate 334 is a catalytic residue. Residues histidine 337 and histidine 343 each contribute to the Zn(2+) site. The propeptide occupies 393–417 (LKTDTVSTSVSGNEPLDDNVDGFHA). The segment at 398–417 (VSTSVSGNEPLDDNVDGFHA) is disordered. A compositionally biased stretch (acidic residues) spans 407-417 (PLDDNVDGFHA).

It belongs to the venom metalloproteinase (M12B) family. P-I subfamily. In terms of assembly, monomer. Zn(2+) serves as cofactor. Expressed by the venom gland.

It is found in the secreted. This protein is an alkaline zinc metalloprotease from snake venom that possesses weak hemorrhagic activity. This chain is Snake venom metalloproteinase aculysin-1, found in Deinagkistrodon acutus (Hundred-pace snake).